A 1136-amino-acid chain; its full sequence is MDPGSRWRNLPSGPSLKHLTDPSYGIPREQQKAALQELTRAHVESFNYAVHEGLGLAVQAIPPFEFAFKDERISFTILDAVISPPTVPKGTICKEVSVYPAECRGRRCTYRGKLTADISWAVNGISKGIIKQFLGYVPIMVKSKLCNLYNLPPQALIEHHEEAEEMGGYFIINGIEKVIRMLIMPRRNFPIAMVRPKWKTRGPGYTHYGVSMHCVREEHSAVNMNLHYLENGTVMLNFIYRKELFFLPLGFALKALVSFSDYQIFQELIKGKEDDSFLRNSVSQMLRIVMEEGCSTQKQVLNYLGECFRVKLNVPDWYPNEQAAEFLFNQCICIHLKSNTEKFYMLCLMTRKLFALAKGECMEDNPDSLVNQEVLTPGQLFLMFLKEKLEGWLVSIKIAFDKKAQKTNVSMNTDNLMRIFTMGIDLTKPFEYLFATGNLRSKTGLGLLQDSGLCVVADKLNFIRYLSHFRCVHRGADFAKMRTTTVRRLLPESWGFLCPVHTPDGEPCGLMNHLTAVCEVVTQFVYTASIPALLCNLGVTPIDGAPHRSYSECYPVLLDGVMVGWVDKELAPGIADSLRHFKVLREKRIPPWTEVVLIPMTGKPSLYPGLFLFTTPCRLVRPVQNLELGKEELIGTMEQIFMNVAIFEDEVFAGVTTHQELFPHSLLSVIANFIPFSDHNQSPRNMYQCQMGKQTMGFPLLTYQDRSDNKLYRLQTPQSPLVRPSMYDYYDMDNYPIGTNAIVAVISYTGYDMEDAMIVNKASWERGFAHGSVYKSEFIDLSEKIKQGDSSLVFGMKPGDPRILQKLDDDGLPFIGAKLQYGDPYYSYLNLNTGESFVMYYKSKENCVVDNIKVCSNDTGSGKFKCVCITMRVPRNPTIGDKFASRHGQKGILSRLWPAEDMPFTESGMVPDILFNPHGFPSRMTIGMLIESMAGKSAALHGLCHDATPFIFSEENSALEYFGEMLKAAGYNFYGTERLYSGISGLELEADIFIGVVYYQRLRHMVSDKFQVRTTGARDRVTNQPIGGRNVQGGIRFGEMERDALLAHGTSFFLLHDRLFNCSDRSVAHVCVKCGSLLSPLLEKPPPSWSAMRNRKYNCTLCNRSDTIDTVSVPYVFRYFVAELAAMNIKVKLDVV.

The interval 1 to 24 (MDPGSRWRNLPSGPSLKHLTDPSY) is disordered. R180 is a binding site for RNA. Residues 194 to 208 (VRPKWKTRGPGYTHY) are loop B. The loop A stretch occupies residues 236–247 (LNFIYRKELFFL). D367 is an RNA binding site. Fork loop stretches follow at residues 439 to 453 (LRSK…DSGL) and 474 to 489 (RGAD…VRRL). K890 lines the RNA pocket. 2 residues coordinate DNA: R1020 and R1036. A Phosphoserine modification is found at S1051. Positions 1071, 1074, 1099, and 1102 each coordinate Zn(2+). Residues 1071–1102 (CVKCGSLLSPLLEKPPPSWSAMRNRKYNCTLC) form a C4-type zinc finger.

Belongs to the RNA polymerase beta chain family. As to quaternary structure, component of the RNA polymerase I (Pol I) complex consisting of 13 subunits: a ten-subunit catalytic core composed of POLR1A/RPA1, POLR1B/RPA2, POLR1C/RPAC1, POLR1D/RPAC2, POLR1H/RPA12, POLR2E/RPABC1, POLR2F/RPABC2, POLR2H/RPABC3, POLR2K/RPABC4 and POLR2L/RPABC5; a mobile stalk subunit POLR1F/RPA43 protruding from the core and additional subunits homologous to general transcription factors POLR1E/RPA49 and POLR1G/RPA34. Part of Pol I pre-initiation complex (PIC), in which Pol I core assembles with RRN3 and promoter-bound UTBF and SL1/TIF-IB complex.

It localises to the nucleus. The protein localises to the nucleolus. It is found in the chromosome. It carries out the reaction RNA(n) + a ribonucleoside 5'-triphosphate = RNA(n+1) + diphosphate. Functionally, catalytic core component of RNA polymerase I (Pol I), a DNA-dependent RNA polymerase which synthesizes ribosomal RNA precursors using the four ribonucleoside triphosphates as substrates. Transcribes 47S pre-rRNAs from multicopy rRNA gene clusters, giving rise to 5.8S, 18S and 28S ribosomal RNAs. Pol I-mediated transcription cycle proceeds through transcription initiation, transcription elongation and transcription termination stages. During transcription initiation, Pol I pre-initiation complex (PIC) is recruited by the selectivity factor 1 (SL1/TIF-IB) complex bound to the core promoter that precedes an rDNA repeat unit. The PIC assembly bends the promoter favoring the formation of the transcription bubble and promoter escape. Once the polymerase has escaped from the promoter it enters the elongation phase during which RNA is actively polymerized, based on complementarity with the template DNA strand. Highly processive, assembles in structures referred to as 'Miller trees' where many elongating Pol I complexes queue and transcribe the same rDNA coding regions. At terminator sequences downstream of the rDNA gene, PTRF interacts with Pol I and halts Pol I transcription leading to the release of the RNA transcript and polymerase from the DNA. Forms Pol I active center together with the largest subunit POLR1A/RPA1. Appends one nucleotide at a time to the 3' end of the nascent RNA, with POLR1A/RPA1 contributing a Mg(2+)-coordinating DxDGD motif, and POLR1B/RPA2 providing lysine residues believed to facilitate Watson-Crick base pairing between the incoming nucleotide and the template base. Typically, Mg(2+) ions direct a 5' nucleoside triphosphate to form a phosphodiester bond with the 3' hydroxyl of the preceding nucleotide of the nascent RNA, with the elimination of pyrophosphate. Has proofreading activity: Pauses and backtracks to allow the cleavage of a missincorporated nucleotide via POLR1H/RPA12. High Pol I processivity is associated with decreased transcription fidelity. The protein is DNA-directed RNA polymerase I subunit RPA2 (POLR1B) of Pongo abelii (Sumatran orangutan).